Reading from the N-terminus, the 549-residue chain is Arginine--tRNA ligase (549 aa).

The 'HIGH' region motif lies at 132–142; sequence ANPTGPLHLAH.

It belongs to the class-I aminoacyl-tRNA synthetase family. In terms of assembly, monomer.

The protein resides in the cytoplasm. The enzyme catalyses tRNA(Arg) + L-arginine + ATP = L-arginyl-tRNA(Arg) + AMP + diphosphate. This Renibacterium salmoninarum (strain ATCC 33209 / DSM 20767 / JCM 11484 / NBRC 15589 / NCIMB 2235) protein is Arginine--tRNA ligase.